The primary structure comprises 581 residues: Adenine deaminase (581 aa).

It belongs to the metallo-dependent hydrolases superfamily. Adenine deaminase family. Mn(2+) serves as cofactor.

The enzyme catalyses adenine + H2O + H(+) = hypoxanthine + NH4(+). The chain is Adenine deaminase from Brucella abortus (strain 2308).